The sequence spans 151 residues: Large ribosomal subunit protein bL9 (151 aa).

It belongs to the bacterial ribosomal protein bL9 family.

Its function is as follows. Binds to the 23S rRNA. The chain is Large ribosomal subunit protein bL9 from Mycobacteroides abscessus (strain ATCC 19977 / DSM 44196 / CCUG 20993 / CIP 104536 / JCM 13569 / NCTC 13031 / TMC 1543 / L948) (Mycobacterium abscessus).